A 347-amino-acid polypeptide reads, in one-letter code: UDP-N-acetylenolpyruvoylglucosamine reductase (347 aa).

The region spanning 24–195 (FDARARVAAR…VAVTFRLPKA (172 aa)) is the FAD-binding PCMH-type domain. The active site involves Arg-171. The active-site Proton donor is Ser-247. The active site involves Glu-343.

It belongs to the MurB family. FAD serves as cofactor.

Its subcellular location is the cytoplasm. It carries out the reaction UDP-N-acetyl-alpha-D-muramate + NADP(+) = UDP-N-acetyl-3-O-(1-carboxyvinyl)-alpha-D-glucosamine + NADPH + H(+). It functions in the pathway cell wall biogenesis; peptidoglycan biosynthesis. Functionally, cell wall formation. In Burkholderia mallei (strain NCTC 10247), this protein is UDP-N-acetylenolpyruvoylglucosamine reductase.